A 977-amino-acid chain; its full sequence is Poly(ADP-ribose) glycohydrolase (977 aa).

The tract at residues 1–69 (MSAGPGCEPC…LGRAGQHRGS (69 aa)) is disordered. The segment at 1-457 (MSAGPGCEPC…LSPDKKWLGT (457 aa)) is A-domain. The Nuclear localization signal signature appears at 10-16 (CTKRPRW). The segment covering 17–29 (DAAATSPPAASDA) has biased composition (low complexity). Ser-69 bears the Phosphoserine mark. The short motif at 77-84 (QKTITSWM) is the PIP-box (PCNA interacting peptide) element. 2 positions are modified to phosphoserine: Ser-138 and Ser-198. The segment at 184–407 (SNANVDQSSP…CRNSKQHGRK (224 aa)) is disordered. Basic and acidic residues-rich tracts occupy residues 192 to 207 (SPKD…ESRD) and 223 to 234 (TMEDEQGREARS). At Thr-200 the chain carries Phosphothreonine. Ser-262, Ser-265, Ser-287, Ser-292, Ser-299, Ser-303, and Ser-317 each carry phosphoserine. Over residues 280–291 (NRLNRQESSLGN) the composition is skewed to polar residues. Residues 317-332 (SEADEETSPGFDEQED) are compositionally biased toward acidic residues. Residues 333–343 (SSSAQTANKPS) are compositionally biased toward polar residues. Position 341 is an N6-acetyllysine (Lys-341). Positions 346–356 (QPREADTELRK) are enriched in basic and acidic residues. Ser-449 carries the phosphoserine modification. Residues 611–796 (QPIPLLKQKM…TEQYSEYTGY (186 aa)) form a catalytic region. Substrate is bound at residue 727–728 (IE). Asp-738 is an active-site residue. Substrate is bound by residues Asn-741 and Gln-755. Active-site residues include Glu-756 and Glu-757. Substrate is bound by residues Tyr-796 and 870–875 (NWGCGA).

The protein belongs to the poly(ADP-ribose) glycohydrolase family. Interacts with PCNA. Interacts with NUDT5.

The protein resides in the nucleus. The catalysed reaction is [(1''-&gt;2')-ADP-alpha-D-ribose](n) + H2O = [(1''-&gt;2')-ADP-alpha-D-ribose](n-1) + ADP-D-ribose. Poly(ADP-ribose) glycohydrolase that degrades poly(ADP-ribose) by hydrolyzing the ribose-ribose bonds present in poly(ADP-ribose). PARG acts both as an endo- and exoglycosidase, releasing poly(ADP-ribose) of different length as well as ADP-ribose monomers. It is however unable to cleave the ester bond between the terminal ADP-ribose and ADP-ribosylated residues, leaving proteins that are mono-ADP-ribosylated. Poly(ADP-ribose) is synthesized after DNA damage is only present transiently and is rapidly degraded by PARG. Required to prevent detrimental accumulation of poly(ADP-ribose) upon prolonged replicative stress, while it is not required for recovery from transient replicative stress. Responsible for the prevalence of mono-ADP-ribosylated proteins in cells, thanks to its ability to degrade poly(ADP-ribose) without cleaving the terminal protein-ribose bond. Required for retinoid acid-dependent gene transactivation, probably by removing poly(ADP-ribose) from histone demethylase KDM4D, allowing chromatin derepression at RAR-dependent gene promoters. Involved in the synthesis of ATP in the nucleus, together with PARP1, NMNAT1 and NUDT5. Nuclear ATP generation is required for extensive chromatin remodeling events that are energy-consuming. The polypeptide is Poly(ADP-ribose) glycohydrolase (Bos taurus (Bovine)).